Consider the following 512-residue polypeptide: Maturase K (512 aa).

Belongs to the intron maturase 2 family. MatK subfamily.

It localises to the plastid. It is found in the chloroplast. Usually encoded in the trnK tRNA gene intron. Probably assists in splicing its own and other chloroplast group II introns. This is Maturase K from Platanus occidentalis (Sycamore).